Here is a 298-residue protein sequence, read N- to C-terminus: Mimecan (298 aa).

The N-terminal stretch at 1 to 20 (MKTLQSTLLLLLLVPLIKPA) is a signal peptide. Residue Thr80 is glycosylated (O-linked (GalNAc...) threonine). Asn88 carries N-linked (GlcNAc...) (keratan sulfate) asparagine glycosylation. LRR repeat units follow at residues 112–131 (DAVP…FNKI), 132–155 (KKLT…GNLI), 156–179 (EDIE…ENQL), 180–199 (LKLP…YNKI), 200–225 (KSRG…HNAL), 226–246 (ESVP…FNNI), and 247–277 (ASIT…GNPI). Asn214 is a glycosylation site (N-linked (GlcNAc...) (keratan sulfate) asparagine). Cys255 and Cys288 are oxidised to a cystine. A glycan (N-linked (GlcNAc...) (keratan sulfate) asparagine) is linked at Asn258.

It belongs to the small leucine-rich proteoglycan (SLRP) family. SLRP class III subfamily. In terms of processing, O-glycosylated with a core 1 or possibly core 8 glycan. Post-translationally, contains keratan sulfate. As to expression, bone.

It is found in the secreted. The protein localises to the extracellular space. The protein resides in the extracellular matrix. In terms of biological role, induces bone formation in conjunction with TGF-beta-1 or TGF-beta-2. The polypeptide is Mimecan (OGN) (Homo sapiens (Human)).